Consider the following 218-residue polypeptide: Large ribosomal subunit protein uL3 (218 aa).

This sequence belongs to the universal ribosomal protein uL3 family. Part of the 50S ribosomal subunit. Forms a cluster with proteins L14 and L19.

Its function is as follows. One of the primary rRNA binding proteins, it binds directly near the 3'-end of the 23S rRNA, where it nucleates assembly of the 50S subunit. This Corynebacterium diphtheriae (strain ATCC 700971 / NCTC 13129 / Biotype gravis) protein is Large ribosomal subunit protein uL3.